The primary structure comprises 127 residues: Large ribosomal subunit protein bL17 (127 aa).

This sequence belongs to the bacterial ribosomal protein bL17 family. Part of the 50S ribosomal subunit. Contacts protein L32.

The polypeptide is Large ribosomal subunit protein bL17 (Lactobacillus gasseri (strain ATCC 33323 / DSM 20243 / BCRC 14619 / CIP 102991 / JCM 1131 / KCTC 3163 / NCIMB 11718 / NCTC 13722 / AM63)).